Reading from the N-terminus, the 258-residue chain is Small ribosomal subunit protein uS2 (258 aa).

Residues 226–258 form a disordered region; that stretch reads AQNKDVEPVADKDEKPEAAPVDEAETATETTGE. A compositionally biased stretch (basic and acidic residues) spans 229 to 242; that stretch reads KDVEPVADKDEKPE. The segment covering 245–258 has biased composition (acidic residues); that stretch reads PVDEAETATETTGE.

Belongs to the universal ribosomal protein uS2 family.

The chain is Small ribosomal subunit protein uS2 from Solidesulfovibrio magneticus (strain ATCC 700980 / DSM 13731 / RS-1) (Desulfovibrio magneticus).